Here is a 30-residue protein sequence, read N- to C-terminus: Kalata-B10 (30 aa).

A cross-link (cyclopeptide (Gly-Asp)) is located at residues 1–30 (GLPTCGETCFGGTCNTPGCSCSSWPICTRD). 3 disulfides stabilise this stretch: cysteine 5/cysteine 19, cysteine 9/cysteine 21, and cysteine 14/cysteine 27.

This sequence belongs to the cyclotide family. Moebius subfamily. This peptide occurs in both cyclic and linear forms. The linear form contains unmodified Trp-24, the cyclic peptide occurs in two forms with unmodified Trp-24, and with Trp-24 oxidized to form oxindolylalanine. Oxidation is enhanced by exposure to sunlight.

Its function is as follows. Probably participates in a plant defense mechanism. This chain is Kalata-B10, found in Oldenlandia affinis.